The following is a 75-amino-acid chain: Conotoxin Vc6a (75 aa).

Residues 1-22 form the signal peptide; the sequence is MKLTCVVIVAVLFLTANTFATA. Residues 23–49 constitute a propeptide that is removed on maturation; sequence DDPRNGLENLFLKAHHEMNPEASKLNE. 3 disulfides stabilise this stretch: Cys-51/Cys-66, Cys-58/Cys-69, and Cys-65/Cys-74.

As to expression, expressed by the venom duct.

The protein resides in the secreted. The protein is Conotoxin Vc6a of Conus victoriae (Queen Victoria cone).